Here is an 87-residue protein sequence, read N- to C-terminus: U18-myrmicitoxin-Mri1a (87 aa).

The N-terminal stretch at 1–32 is a signal peptide; the sequence is MKNNYNRINTFIVYLMVTFSLISIISITECTP. The EGF-like domain maps to 33-77; the sequence is NHDPCPPQYAEALCLNGGTCFSVTIMGSDNYNCICAPGFRGWRCQ. Disulfide bonds link cysteine 37-cysteine 52, cysteine 46-cysteine 65, and cysteine 67-cysteine 76.

In terms of processing, O-glycosylated. As to expression, expressed by the venom gland.

It is found in the secreted. The chain is U18-myrmicitoxin-Mri1a from Manica rubida (European giant red ant).